A 294-amino-acid polypeptide reads, in one-letter code: NADH-cytochrome b5 reductase 1 (294 aa).

The chain crosses the membrane as a helical span at residues 18–38; that stretch reads PFIVFATVATIISAFIGYYFL. Residues 51 to 154 form the FAD-binding FR-type domain; that stretch reads DEFQKFPLIE…RGPKGFFTYT (104 aa). FAD is bound by residues 134–149 and 160–192; these read AGKN…GPKG and SFGM…KIHL.

This sequence belongs to the flavoprotein pyridine nucleotide cytochrome reductase family. As to quaternary structure, monomer. Component of the 2-(3-amino-3-carboxypropyl)histidine synthase complex composed of DPH1, DPH2, DPH3 and a NADH-dependent reductase, predominantly CBR1. It depends on FAD as a cofactor.

Its subcellular location is the mitochondrion outer membrane. It carries out the reaction 2 Fe(III)-[cytochrome b5] + NADH = 2 Fe(II)-[cytochrome b5] + NAD(+) + H(+). The enzyme catalyses 2 Fe(3+)-[Dph3] + NADH = 2 Fe(2+)-[Dph3] + NAD(+) + H(+). The protein operates within protein modification; peptidyl-diphthamide biosynthesis. Functionally, NADH-dependent reductase for DPH3 and cytochrome b5. Required for the first step of diphthamide biosynthesis, a post-translational modification of histidine which occurs in elongation factor 2. DPH1 and DPH2 transfer a 3-amino-3-carboxypropyl (ACP) group from S-adenosyl-L-methionine (SAM) to a histidine residue, the reaction is assisted by a reduction system comprising DPH3 and a NADH-dependent reductase, predominantly CBR1. By reducing DPH3, also involved in the formation of the tRNA wobble base modification mcm5s 2U (5-methoxycarbonylmethyl-2-thiouridine), mediated by the elongator complex. The cytochrome b5/NADH cytochrome b5 reductase electron transfer system supports the catalytic activity of several sterol biosynthetic enzymes. The chain is NADH-cytochrome b5 reductase 1 (CBR1) from Candida albicans (strain SC5314 / ATCC MYA-2876) (Yeast).